The sequence spans 979 residues: Mast/stem cell growth factor receptor Kit (979 aa).

Residues 1-27 (MRGARGAWDFLCVLLLLLLLGVQTGSS) form the signal peptide. Topologically, residues 28-527 (QPSVSPGEPS…QIHPHTLFTP (500 aa)) are extracellular. 5 consecutive Ig-like C2-type domains span residues 29–114 (PSVS…VFVR), 123–207 (DLPL…LKVR), 214–311 (PVVS…LEVV), 320–413 (PMMS…VYVN), and 416–510 (PEIL…FNFA). The cysteines at positions 60 and 99 are disulfide-linked. N-linked (GlcNAc...) asparagine glycans are attached at residues asparagine 96, asparagine 132, and asparagine 147. Cystine bridges form between cysteine 138-cysteine 188, cysteine 153-cysteine 185, and cysteine 235-cysteine 293. Residues asparagine 286, asparagine 296, asparagine 303, asparagine 355, asparagine 370, asparagine 403, asparagine 466, and asparagine 489 are each glycosylated (N-linked (GlcNAc...) asparagine). A disulfide bridge links cysteine 431 with cysteine 494. A helical transmembrane segment spans residues 528–548 (LLIGFVIAAGMMCIIVMILTY). Over 549-979 (KYLQKPMYEV…TQPLLVHEDV (431 aa)) the chain is Cytoplasmic. A phosphotyrosine; by autocatalysis mark is found at tyrosine 550, tyrosine 556, tyrosine 571, and tyrosine 573. Tyrosine 571 contributes to the Mg(2+) binding site. The important for interaction with phosphotyrosine-binding proteins stretch occupies residues 571 to 573 (YVY). One can recognise a Protein kinase domain in the interval 592–940 (LSFGKTLGAG…ISDSTNHIYS (349 aa)). Residues 599 to 606 (GAGAFGKV), lysine 626, and 674 to 680 (EYCCYGD) contribute to the ATP site. Tyrosine 706, tyrosine 724, and tyrosine 733 each carry phosphotyrosine; by autocatalysis. Phosphoserine; by PKC/PRKCA is present on residues serine 744 and serine 749. Catalysis depends on aspartate 795, which acts as the Proton acceptor. Residue arginine 799 coordinates ATP. Residues asparagine 800 and aspartate 813 each coordinate Mg(2+). Serine 824 is subject to Phosphoserine. Tyrosine 826 carries the phosphotyrosine; by autocatalysis modification. Serine 894 carries the post-translational modification Phosphoserine. Phosphotyrosine; by autocatalysis is present on residues tyrosine 903 and tyrosine 939. Serine 962 carries the post-translational modification Phosphoserine.

This sequence belongs to the protein kinase superfamily. Tyr protein kinase family. CSF-1/PDGF receptor subfamily. In terms of assembly, monomer in the absence of bound KITLG/SCF. Homodimer in the presence of bound KITLG/SCF, forming a heterotetramer with two KITLG/SCF molecules. Interacts (via phosphorylated tyrosine residues) with the adapter proteins GRB2 and GRB7 (via SH2 domain), and SH2B2/APS. Interacts (via C-terminus) with MPDZ (via the tenth PDZ domain). Interacts (via phosphorylated tyrosine residues) with PIK3R1 and PIK3 catalytic subunit. Interacts (via phosphorylated tyrosine) with CRK (isoform Crk-II), FYN, SHC1 and MATK/CHK (via SH2 domain). Interacts with LYN and FES/FPS. Interacts (via phosphorylated tyrosine residues) with the protein phosphatases PTPN6/SHP-1 (via SH2 domain), PTPN11/SHP-2 (via SH2 domain) and PTPRU. Interacts with PLCG1. Interacts with DOK1 and TEC. Interacts with IL1RAP (independent of stimulation with KITLG/SCF). A mast cell-specific KITLG/SCF-induced interleukin-33 signaling complex contains IL1RL1, IL1RAP, KIT and MYD88. Ubiquitinated by SOCS6. KIT is rapidly ubiquitinated after autophosphorylation induced by KITLG/SCF binding, leading to internalization and degradation. In terms of processing, autophosphorylated on tyrosine residues. KITLG/SCF binding promotes autophosphorylation. Phosphorylated tyrosine residues are important for interaction with specific binding partners.

The protein resides in the cell membrane. The catalysed reaction is L-tyrosyl-[protein] + ATP = O-phospho-L-tyrosyl-[protein] + ADP + H(+). With respect to regulation, present in an inactive conformation in the absence of bound ligand. KITLG/SCF binding leads to dimerization and activation by autophosphorylation on tyrosine residues. Activity is down-regulated by PRKCA-mediated phosphorylation on serine residues. Its function is as follows. Tyrosine-protein kinase that acts as a cell-surface receptor for the cytokine KITLG/SCF and plays an essential role in the regulation of cell survival and proliferation, hematopoiesis, stem cell maintenance, gametogenesis, mast cell development, migration and function, and in melanogenesis. In response to KITLG/SCF binding, KIT can activate several signaling pathways. Phosphorylates PIK3R1, PLCG1, SH2B2/APS and CBL. Activates the AKT1 signaling pathway by phosphorylation of PIK3R1, the regulatory subunit of phosphatidylinositol 3-kinase. Activated KIT also transmits signals via GRB2 and activation of RAS, RAF1 and the MAP kinases MAPK1/ERK2 and/or MAPK3/ERK1. Promotes activation of STAT family members STAT1, STAT3, STAT5A and STAT5B. Activation of PLCG1 leads to the production of the cellular signaling molecules diacylglycerol and inositol 1,4,5-trisphosphate. KIT signaling is modulated by protein phosphatases, and by rapid internalization and degradation of the receptor. Activated KIT promotes phosphorylation of the protein phosphatases PTPN6/SHP-1 and PTPRU, and of the transcription factors STAT1, STAT3, STAT5A and STAT5B. Promotes phosphorylation of PIK3R1, CBL, CRK (isoform Crk-II), LYN, MAPK1/ERK2 and/or MAPK3/ERK1, PLCG1, SRC and SHC1. The polypeptide is Mast/stem cell growth factor receptor Kit (KIT) (Canis lupus familiaris (Dog)).